The chain runs to 623 residues: Keratin, type I cytoskeletal 9 (623 aa).

Positions 1 to 13 are enriched in low complexity; it reads MSCRQFSSSYLSR. Residues 1–25 are disordered; the sequence is MSCRQFSSSYLSRSGGGGGGGLGSG. Residues 1-152 are head; that stretch reads MSCRQFSSSY…GGDGGILTAN (152 aa). Phosphoserine is present on residues Ser-14 and Ser-57. Residues 14 to 25 show a composition bias toward gly residues; sequence SGGGGGGGLGSG. The segment at 153–188 is coil 1A; that stretch reads EKSTMQELNSRLASYLDKVQALEEANNDLENKIQDW. The 313-residue stretch at 153–465 folds into the IF rod domain; sequence EKSTMQELNS…NLLEGGQEDF (313 aa). The tract at residues 189 to 207 is linker 1; it reads YDKKGPAAIQKNYSPYYNT. The interval 208–299 is coil 1B; sequence IDDLKDQIVD…KNHKEEMSQL (92 aa). Positions 300–322 are linker 12; sequence TGQNSGDVNVEINVAPGKDLTKT. A coil 2 region spans residues 323–461; that stretch reads LNDMRQEYEQ…ETYHNLLEGG (139 aa). 2 disordered regions span residues 462-496 and 534-623; these read QEDF…SGGS and YGGG…SSHS. The interval 462-623 is tail; the sequence is QEDFESSGAG…GGGSGKSSHS (162 aa). Residues 471-496 are compositionally biased toward gly residues; that stretch reads GKIGLGGRGGSGGSYGRGSRGGSGGS.

It belongs to the intermediate filament family. As to quaternary structure, heterotetramer of two type I and two type II keratins. As to expression, expressed in the terminally differentiated epidermis of palms and soles.

Functionally, may serve an important special function either in the mature palmar and plantar skin tissue or in the morphogenetic program of the formation of these tissues. Plays a role in keratin filament assembly. This is Keratin, type I cytoskeletal 9 (KRT9) from Homo sapiens (Human).